We begin with the raw amino-acid sequence, 149 residues long: Transcription antitermination protein NusB (149 aa).

The protein belongs to the NusB family.

Functionally, involved in transcription antitermination. Required for transcription of ribosomal RNA (rRNA) genes. Binds specifically to the boxA antiterminator sequence of the ribosomal RNA (rrn) operons. This Caulobacter vibrioides (strain ATCC 19089 / CIP 103742 / CB 15) (Caulobacter crescentus) protein is Transcription antitermination protein NusB.